The following is a 481-amino-acid chain: Cysteine--tRNA ligase (481 aa).

C29 is a Zn(2+) binding site. The 'HIGH' region motif lies at 31–41; it reads PTVYDYSHLGH. 3 residues coordinate Zn(2+): C210, H235, and E239. The 'KMSKS' region signature appears at 272-276; the sequence is KMSKS. K275 lines the ATP pocket.

It belongs to the class-I aminoacyl-tRNA synthetase family. As to quaternary structure, monomer. It depends on Zn(2+) as a cofactor.

The protein resides in the cytoplasm. It carries out the reaction tRNA(Cys) + L-cysteine + ATP = L-cysteinyl-tRNA(Cys) + AMP + diphosphate. The sequence is that of Cysteine--tRNA ligase from Anaeromyxobacter sp. (strain K).